A 165-amino-acid polypeptide reads, in one-letter code: Phosphopantetheine adenylyltransferase (165 aa).

Ser-10 lines the substrate pocket. Residues 10 to 11 (SF) and His-18 contribute to the ATP site. Positions 42, 74, and 88 each coordinate substrate. Residues 89 to 91 (GLR), Glu-99, and 124 to 130 (YSFLSSS) each bind ATP.

Belongs to the bacterial CoaD family. As to quaternary structure, homohexamer. The cofactor is Mg(2+).

It is found in the cytoplasm. It catalyses the reaction (R)-4'-phosphopantetheine + ATP + H(+) = 3'-dephospho-CoA + diphosphate. The protein operates within cofactor biosynthesis; coenzyme A biosynthesis; CoA from (R)-pantothenate: step 4/5. Functionally, reversibly transfers an adenylyl group from ATP to 4'-phosphopantetheine, yielding dephospho-CoA (dPCoA) and pyrophosphate. The sequence is that of Phosphopantetheine adenylyltransferase from Anoxybacillus flavithermus (strain DSM 21510 / WK1).